Here is a 288-residue protein sequence, read N- to C-terminus: Sulfur carrier protein FdhD (288 aa).

The interval 1–23 (MMRCMQSPEVHPAAAGDAEPPTH) is disordered. Residue C127 is the Cysteine persulfide intermediate of the active site.

This sequence belongs to the FdhD family.

The protein localises to the cytoplasm. In terms of biological role, required for formate dehydrogenase (FDH) activity. Acts as a sulfur carrier protein that transfers sulfur from IscS to the molybdenum cofactor prior to its insertion into FDH. This Cupriavidus necator (strain ATCC 17699 / DSM 428 / KCTC 22496 / NCIMB 10442 / H16 / Stanier 337) (Ralstonia eutropha) protein is Sulfur carrier protein FdhD.